A 268-amino-acid chain; its full sequence is Tryptophan synthase alpha chain (268 aa).

Catalysis depends on proton acceptor residues glutamate 40 and aspartate 51.

It belongs to the TrpA family. In terms of assembly, tetramer of two alpha and two beta chains.

The enzyme catalyses (1S,2R)-1-C-(indol-3-yl)glycerol 3-phosphate + L-serine = D-glyceraldehyde 3-phosphate + L-tryptophan + H2O. Its pathway is amino-acid biosynthesis; L-tryptophan biosynthesis; L-tryptophan from chorismate: step 5/5. Functionally, the alpha subunit is responsible for the aldol cleavage of indoleglycerol phosphate to indole and glyceraldehyde 3-phosphate. In Geobacillus thermodenitrificans (strain NG80-2), this protein is Tryptophan synthase alpha chain.